We begin with the raw amino-acid sequence, 999 residues long: Receptor-like protein kinase 5 (999 aa).

Residues 1 to 14 form the signal peptide; sequence MLYCLILLLCLSST. Residues 15-621 lie on the Extracellular side of the membrane; sequence YLPSLSLNQD…LCRKITRSKN (607 aa). LRR repeat units lie at residues 90–112, 115–137, 140–161, 164–186, and 188–208; these read SLHS…DFDT, NLIS…LPFN, NLKF…SFGE, KLES…LGNV, and TLKE…PSQL. 2 N-linked (GlcNAc...) asparagine glycosylation sites follow: N98 and N102. Residues N150 and N185 are each glycosylated (N-linked (GlcNAc...) asparagine). An N-linked (GlcNAc...) asparagine glycan is attached at N210. LRR repeat units follow at residues 213–236 and 237–259; these read ELQV…SRLT and SLVN…ITQL. N-linked (GlcNAc...) asparagine glycosylation is found at N269 and N282. 12 LRR repeats span residues 285–307, 308–330, 332–353, 356–378, 380–402, 404–427, 428–450, 452–474, 500–523, 524–546, 548–569, and 571–593; these read TLKR…LNLL, NLES…ITRS, TLSE…QLGA, PLQY…VCGE, KLEY…LGKC, SLTR…WGLP, RLSL…IIGA, NLSN…IGSL, QLSR…RGWK, NLNE…VGIL, VLNY…ELQN, and KLNV…YANK. N452 carries N-linked (GlcNAc...) asparagine glycosylation. Residue N576 is glycosylated (N-linked (GlcNAc...) asparagine). Residues 622 to 641 form a helical membrane-spanning segment; sequence IGYVWILLTIFLLAGLVFVV. The Cytoplasmic portion of the chain corresponds to 642-999; the sequence is GIVMFIAKCR…PYYTEDLNSV (358 aa). A Protein kinase domain is found at 683 to 968; that stretch reads LDEKNVIGFG…KVVIMLQEVS (286 aa). ATP is bound by residues 689 to 697 and K711; that span reads IGFGSSGKV. Phosphotyrosine is present on residues Y766 and Y806. The Proton acceptor role is filled by D819. S856 carries the phosphoserine modification. A phosphotyrosine mark is found at Y864 and Y871. Position 872 is a phosphothreonine (T872). The segment at 972-999 is disordered; sequence PCSSPNTSKRSKTGGKLSPYYTEDLNSV.

Belongs to the protein kinase superfamily. Ser/Thr protein kinase family. Interacts with CST. Binds to IDA. Mg(2+) is required as a cofactor. It depends on Mn(2+) as a cofactor. Autophosphorylated on Ser, Thr and Tyr residues. As to expression, expressed in roots and rosettes. Expressed at the base of petioles and pedicels, and in the abscission zones of the floral organs.

The protein localises to the cell membrane. The enzyme catalyses L-seryl-[protein] + ATP = O-phospho-L-seryl-[protein] + ADP + H(+). It carries out the reaction L-threonyl-[protein] + ATP = O-phospho-L-threonyl-[protein] + ADP + H(+). The catalysed reaction is L-tyrosyl-[protein] + ATP = O-phospho-L-tyrosyl-[protein] + ADP + H(+). In terms of biological role, receptor with a dual specificity kinase activity acting on both serine/threonine- and tyrosine-containing substrates that controls floral organ abscission. May interact with the 'INFLORESCENCE DEFICIENT IN ABSCISSION' (IDA) ligands family. This Arabidopsis thaliana (Mouse-ear cress) protein is Receptor-like protein kinase 5 (RLK5).